Consider the following 184-residue polypeptide: ADP-ribosylation factor-like protein 2 (184 aa).

G2 carries the N-myristoyl glycine lipid modification. Residues 23–30 (GLDNAGKT), 66–70 (DIGGQ), and 125–128 (NKQD) each bind GTP.

This sequence belongs to the small GTPase superfamily. Arf family.

In terms of biological role, may be involved in trafficking events within the endosomal system. The chain is ADP-ribosylation factor-like protein 2 (arl2) from Dictyostelium discoideum (Social amoeba).